Reading from the N-terminus, the 126-residue chain is Histone H2B-alpha (126 aa).

Positions 1 to 34 (MSAAEKKPASKAPAGKAPRDTMKSADKKRGKNRK) are disordered. N6-acetyllysine; alternate occurs at positions 6 and 7. Glycyl lysine isopeptide (Lys-Gly) (interchain with G-Cter in SUMO); alternate cross-links involve residues K6 and K7. S10 bears the Phosphoserine mark. Residue K11 is modified to N6-acetyllysine. Residues 17–27 (APRDTMKSADK) show a composition bias toward basic and acidic residues. Residue K120 forms a Glycyl lysine isopeptide (Lys-Gly) (interchain with G-Cter in ubiquitin) linkage.

It belongs to the histone H2B family. In terms of assembly, the nucleosome is a histone octamer containing two molecules each of H2A, H2B, H3 and H4 assembled in one H3-H4 heterotetramer and two H2A-H2B heterodimers. The octamer wraps approximately 147 bp of DNA. Interacts with rik1. Post-translationally, monoubiquitinated by the rhp6/ubc2-bre1 complex to form H2BK123ub1. H2BK123ub1 gives a specific tag for epigenetic transcriptional activation and is also prerequisite for H3K4me and H3K79me formation. H2BK123ub1 also modulates the formation of double-strand breaks during meiosis and is a prerequisite for DNA-damage checkpoint activation. In terms of processing, phosphorylated by shk1 to form H2BS10ph during progression through meiotic prophase. May be correlated with chromosome condensation. Acetylation of N-terminal lysines and particularly formation of H2BK11ac has a positive effect on transcription. Post-translationally, sumoylation to form H2BK6su or H2BK7su occurs preferentially near the telomeres and represses gene transcription.

Its subcellular location is the nucleus. The protein resides in the chromosome. Core component of nucleosome. Nucleosomes wrap and compact DNA into chromatin, limiting DNA accessibility to the cellular machineries which require DNA as a template. Histones thereby play a central role in transcription regulation, DNA repair, DNA replication and chromosomal stability. DNA accessibility is regulated via a complex set of post-translational modifications of histones, also called histone code, and nucleosome remodeling. This is Histone H2B-alpha (htb1) from Schizosaccharomyces pombe (strain 972 / ATCC 24843) (Fission yeast).